A 303-amino-acid chain; its full sequence is Protease HtpX homolog (303 aa).

The next 2 helical transmembrane spans lie at 4 to 24 (VVLFLLTNLAVIAVLSITARI) and 38 to 58 (MGMLLAFAALIGFGGAFISLL). Histidine 144 provides a ligand contact to Zn(2+). Residue glutamate 145 is part of the active site. Histidine 148 provides a ligand contact to Zn(2+). The next 2 membrane-spanning stretches (helical) occupy residues 152-172 (GDMVTLTLIQGVVNTFVIFLS) and 199-219 (ISSIAFEIVFGVLASIVVMYF). Glutamate 224 lines the Zn(2+) pocket.

Belongs to the peptidase M48B family. Zn(2+) serves as cofactor.

It localises to the cell inner membrane. The chain is Protease HtpX homolog from Chlorobium phaeobacteroides (strain BS1).